We begin with the raw amino-acid sequence, 954 residues long: Bifunctional endo-1,4-beta-xylanase XylA (954 aa).

The segment at residues 1–27 (MKLSKIKKVLSGTVSALMIASAAPVVA) is a signal peptide (or 28, or 29). In terms of domain architecture, GH11 spans 29–236 (AADQQTRGNV…SNGSANVKSV (208 aa)). Residue Glu122 is the Nucleophile of the active site. Catalysis depends on Glu223, which acts as the Proton donor. The span at 233 to 243 (VKSVSVTQGGS) shows a compositional bias: polar residues. A disordered region spans residues 233 to 628 (VKSVSVTQGG…NNNNSAGSSD (396 aa)). A compositionally biased stretch (low complexity) spans 246 to 622 (NGGQQQNNDW…WNQGQQNNNN (377 aa)). The GH10 domain maps to 624–952 (AGSSDSLKGA…KPAYDRVMAL (329 aa)). Glu774 serves as the catalytic Proton donor. The active-site Nucleophile is Glu884.

This sequence in the N-terminal section; belongs to the glycosyl hydrolase 11 (cellulase G) family. The protein in the C-terminal section; belongs to the glycosyl hydrolase 10 (cellulase F) family.

It catalyses the reaction Endohydrolysis of (1-&gt;4)-beta-D-xylosidic linkages in xylans.. Its pathway is glycan degradation; xylan degradation. Xylanase domain releases more xylo-oligosaccharides and GH10 domain more xylose. The protein is Bifunctional endo-1,4-beta-xylanase XylA (xynA) of Ruminococcus flavefaciens.